Reading from the N-terminus, the 177-residue chain is SsrA-binding protein (177 aa).

Disordered regions lie at residues Met1–Lys23 and Tyr148–Glu177. The segment covering Tyr148–Arg165 has biased composition (basic and acidic residues).

It belongs to the SmpB family.

Its subcellular location is the cytoplasm. In terms of biological role, required for rescue of stalled ribosomes mediated by trans-translation. Binds to transfer-messenger RNA (tmRNA), required for stable association of tmRNA with ribosomes. tmRNA and SmpB together mimic tRNA shape, replacing the anticodon stem-loop with SmpB. tmRNA is encoded by the ssrA gene; the 2 termini fold to resemble tRNA(Ala) and it encodes a 'tag peptide', a short internal open reading frame. During trans-translation Ala-aminoacylated tmRNA acts like a tRNA, entering the A-site of stalled ribosomes, displacing the stalled mRNA. The ribosome then switches to translate the ORF on the tmRNA; the nascent peptide is terminated with the 'tag peptide' encoded by the tmRNA and targeted for degradation. The ribosome is freed to recommence translation, which seems to be the essential function of trans-translation. This Streptomyces avermitilis (strain ATCC 31267 / DSM 46492 / JCM 5070 / NBRC 14893 / NCIMB 12804 / NRRL 8165 / MA-4680) protein is SsrA-binding protein.